Reading from the N-terminus, the 227-residue chain is Thymidylate synthase (227 aa).

A dUMP-binding site is contributed by R89–R90. The active-site Nucleophile is C109. Residues R129–D132, N140, and H170–Y172 each bind dUMP. D132 is a binding site for (6R)-5,10-methylene-5,6,7,8-tetrahydrofolate.

The protein belongs to the thymidylate synthase family. Bacterial-type ThyA subfamily. In terms of assembly, homodimer.

The protein localises to the cytoplasm. It carries out the reaction dUMP + (6R)-5,10-methylene-5,6,7,8-tetrahydrofolate = 7,8-dihydrofolate + dTMP. It functions in the pathway pyrimidine metabolism; dTTP biosynthesis. Its function is as follows. Catalyzes the reductive methylation of 2'-deoxyuridine-5'-monophosphate (dUMP) to 2'-deoxythymidine-5'-monophosphate (dTMP) while utilizing 5,10-methylenetetrahydrofolate (mTHF) as the methyl donor and reductant in the reaction, yielding dihydrofolate (DHF) as a by-product. This enzymatic reaction provides an intracellular de novo source of dTMP, an essential precursor for DNA biosynthesis. In Bacillus atrophaeus, this protein is Thymidylate synthase.